The sequence spans 418 residues: Outer membrane protein assembly factor BamB (418 aa).

Residues 1 to 28 (MFHNTCGRKGRFARAMGMALAISVTLSG) form the signal peptide. Cys29 carries the N-palmitoyl cysteine lipid modification. A lipid anchor (S-diacylglycerol cysteine) is attached at Cys29.

It belongs to the BamB family. As to quaternary structure, part of the Bam complex.

It is found in the cell outer membrane. Part of the outer membrane protein assembly complex, which is involved in assembly and insertion of beta-barrel proteins into the outer membrane. The chain is Outer membrane protein assembly factor BamB from Alteromonas naphthalenivorans.